The primary structure comprises 502 residues: N-sulphoglucosamine sulphohydrolase (502 aa).

An N-terminal signal peptide occupies residues 1-20; the sequence is MSCPVPACCALLLVLGLCRA. Asp-31 and Asp-32 together coordinate Ca(2+). A glycan (N-linked (GlcNAc...) asparagine) is linked at Asn-41. A Ca(2+)-binding site is contributed by Cys-70. Cys-70 acts as the Nucleophile in catalysis. Residue Cys-70 is modified to 3-oxoalanine (Cys). N-linked (GlcNAc...) asparagine glycosylation is found at Asn-142 and Asn-151. Residues Cys-183 and Cys-194 are joined by a disulfide bond. Asn-264 is a glycosylation site (N-linked (GlcNAc...) asparagine). Ca(2+)-binding residues include Asp-273 and Asn-274. Asn-413 carries N-linked (GlcNAc...) asparagine glycosylation. Cys-481 and Cys-495 form a disulfide bridge.

Belongs to the sulfatase family. The cofactor is Ca(2+). Post-translationally, the conversion to 3-oxoalanine (also known as C-formylglycine, FGly), of a serine or cysteine residue in prokaryotes and of a cysteine residue in eukaryotes, is critical for catalytic activity.

It localises to the lysosome. It carries out the reaction N-sulfo-D-glucosamine + H2O = D-glucosamine + sulfate. Functionally, catalyzes a step in lysosomal heparan sulfate degradation. The protein is N-sulphoglucosamine sulphohydrolase (SGSH) of Homo sapiens (Human).